Consider the following 372-residue polypeptide: Alanine racemase (372 aa).

The active-site Proton acceptor; specific for D-alanine is Lys35. Position 35 is an N6-(pyridoxal phosphate)lysine (Lys35). Substrate is bound at residue Arg143. The active-site Proton acceptor; specific for L-alanine is Tyr268. Met316 contributes to the substrate binding site.

It belongs to the alanine racemase family. Pyridoxal 5'-phosphate is required as a cofactor.

It carries out the reaction L-alanine = D-alanine. It participates in amino-acid biosynthesis; D-alanine biosynthesis; D-alanine from L-alanine: step 1/1. Functionally, catalyzes the interconversion of L-alanine and D-alanine. May also act on other amino acids. The chain is Alanine racemase (alr) from Shewanella frigidimarina (strain NCIMB 400).